Consider the following 121-residue polypeptide: RING-box protein HRT1 (121 aa).

Positions 1–31 (MSNEVDRMDVDEDESQNIAQSSNQSAPVETK) are disordered. Position 15 is a phosphoserine (S15). Low complexity predominate over residues 16–26 (QNIAQSSNQSA). Residues C55, C58, C66, C69, C81, C88, H90, H93, H95, C107, and D110 each contribute to the Zn(2+) site. The segment at 55 to 111 (CAICRNHIMEPCIECQPKAMTDTDNECVAAWGVCNHAFHLHCINKWIKTRDACPLDN) adopts an RING-type zinc-finger fold.

It belongs to the RING-box family. In terms of assembly, component of multiple cullin-RING ligases (CRLs) composed of 4 subunits: the RING protein HRT1, a cullin, a linker protein, and one of many alternative substrate receptors. Component of SCF E3 ubiquitin ligase complexes containing the cullin CDC53, the linker protein SKP1/CBF3D, and substrate receptors containing F-box motifs like DAS1 or GRR1. Component of RTT101(MMS1) E3 ubiquitin ligase complexes containing the cullin RTT101, the linker protein MMS1, and substrate receptors belonging to a protein family described as DCAF (DDB1- and CUL4-associated factor) like MMS22. Component of CRL3 E3 ubiquitin ligase complexes containing the cullin CUL3, the linker protein ELC1, and substrate receptors containing SOCS-box motifs like ELA1. Interacts with CDC53, CUL3, RTT101, CDC4 and CDC34/UBC3.

Its subcellular location is the cytoplasm. The protein localises to the nucleus. Its pathway is protein modification; protein ubiquitination. Its function is as follows. Core component of multiple cullin-RING-based E3 ubiquitin-protein ligase complexes (CRLs), which mediate the ubiquitination of target proteins. Recruits the E2 ubiquitin-conjugating enzyme CDC34/UBC3 to the complex and brings it into close proximity to the substrate. Also stimulates CDC34/UBC3 autoubiquitination and promotes the neddylation of CDC53 and RTT101. Component of the SCF(CDC4) ubiquitin ligase required for ubiquitination of the cyclin-dependent kinase inhibitor SIC1 and for the G1-to-S phase transition. Component of the RTT101(MMS1-MMS22) ubiquitin ligase that promotes fork progression through damaged DNA or natural pause sites. Component of the CRL3(ELA1) ubiquitin ligase required for ubiquitination of RPB1, the largest subunit of RNA polymerase II (Pol II), which targets Pol II for proteasomal degradation in DNA-damaged cells. The chain is RING-box protein HRT1 (HRT1) from Saccharomyces cerevisiae (strain ATCC 204508 / S288c) (Baker's yeast).